A 330-amino-acid chain; its full sequence is MENEEEIFKKLLKKASASSFEKIINLDLNNCSVDFNKYVLLLPKLINLKCLILSNNNTNQLPPFENLQSLEELYLRNFSVTPQQINKTSLSTDSDLTKSFITKIKTLTKLKHLVITGTKFDTNSSKDYIIHYLTTLETLNFERITNEKRQDVNNRIKLIREKHLINKSPTSAKILTTPNKTVVNRQQPQDLSTKKLVNTTSSIINISKSTPNKLQNQVQSSPKLSSPITKNKEQIVSTTSPQKLNNKVDFKLPPQIIDRNSPKHQPKIQSDVSSPLPIEIIPNIIEKTSDRLNGQSNLIQAISLLIGSITTLNDIDFIEDILYERKKILK.

Residues 212–240 (NKLQNQVQSSPKLSSPITKNKEQIVSTTS) are disordered. Positions 214–240 (LQNQVQSSPKLSSPITKNKEQIVSTTS) are enriched in polar residues.

The protein is Putative protein DDB_G0285185 of Dictyostelium discoideum (Social amoeba).